Reading from the N-terminus, the 169-residue chain is uncharacterized protein (169 aa).

Residues 32 to 162 (CNFRVVNSFV…EPAKSDLIKL (131 aa)) enclose the Nudix hydrolase domain. The short motif at 69–91 (GGHVESGETYEDALQRELEEELN) is the Nudix box element. Mg(2+) is bound by residues E85 and E89.

This sequence belongs to the Nudix hydrolase family. Requires Mg(2+) as cofactor.

This is an uncharacterized protein from Nostoc sp. (strain PCC 7120 / SAG 25.82 / UTEX 2576).